We begin with the raw amino-acid sequence, 156 residues long: ATP synthase subunit b (156 aa).

The chain crosses the membrane as a helical span at residues 7–27; that stretch reads LFAQMVVFLILAWFTMKFVWP.

The protein belongs to the ATPase B chain family. As to quaternary structure, F-type ATPases have 2 components, F(1) - the catalytic core - and F(0) - the membrane proton channel. F(1) has five subunits: alpha(3), beta(3), gamma(1), delta(1), epsilon(1). F(0) has three main subunits: a(1), b(2) and c(10-14). The alpha and beta chains form an alternating ring which encloses part of the gamma chain. F(1) is attached to F(0) by a central stalk formed by the gamma and epsilon chains, while a peripheral stalk is formed by the delta and b chains.

The protein localises to the cell inner membrane. In terms of biological role, f(1)F(0) ATP synthase produces ATP from ADP in the presence of a proton or sodium gradient. F-type ATPases consist of two structural domains, F(1) containing the extramembraneous catalytic core and F(0) containing the membrane proton channel, linked together by a central stalk and a peripheral stalk. During catalysis, ATP synthesis in the catalytic domain of F(1) is coupled via a rotary mechanism of the central stalk subunits to proton translocation. Functionally, component of the F(0) channel, it forms part of the peripheral stalk, linking F(1) to F(0). This is ATP synthase subunit b from Paraburkholderia phytofirmans (strain DSM 17436 / LMG 22146 / PsJN) (Burkholderia phytofirmans).